The chain runs to 490 residues: 5'-3' exonuclease PLD3 (490 aa).

At 1–38 (MKPKLMYQELKVPAEEPANELPMNEIEAWKAAEKKARW) the chain is on the cytoplasmic side. A helical; Signal-anchor for type II membrane protein membrane pass occupies residues 39-59 (VLLVLILAVVGFGALMTQLFL). Over 60–490 (WEYGDLHLFG…DSVGNACRLL (431 aa)) the chain is Lumenal. Disulfide bonds link cysteine 77–cysteine 239 and cysteine 81–cysteine 237. Asparagine 97 and asparagine 132 each carry an N-linked (GlcNAc...) asparagine glycan. Residues 196-223 (THGVLHTKFWVVDQTHFYLGSANMDWRS) form the PLD phosphodiesterase 1 domain. Active-site residues include histidine 201, lysine 203, and aspartate 208. Histidine 201 (proton donor) is an active-site residue. Phosphate contacts are provided by histidine 201 and lysine 203. Asparagine 218 contributes to the phosphate binding site. N-linked (GlcNAc...) asparagine glycans are attached at residues asparagine 236, asparagine 284, and asparagine 387. A disulfide bond links cysteine 366 and cysteine 487. Residues 411-437 (YARVNHNKYMVTERATYIGTSNWSGNY) enclose the PLD phosphodiesterase 2 domain. Histidine 416 is a binding site for phosphate. Residue histidine 416 is the Nucleophile of the active site. Phenylalanine 438 is a Mg(2+) binding site.

Belongs to the phospholipase D family. As to quaternary structure, homodimer. Interacts with APP. In terms of processing, N-glycosylated. Proteolytically processed to a soluble form that is stable within endosomes and lysosomes. During transport through the secretory pathway becomes proteolysed by cysteine proteases, thereby releasing a stable soluble lysosomal lumenal polypeptide, whereas the transmembrane-bound fragment is rapidly degraded. Its transport route to lysosomes involves ubiquitination and the ESCRT complex. Post-translationally, ubiquitinated. Ubiquitination mediates sorting into lysosomes.

The protein localises to the endoplasmic reticulum membrane. The protein resides in the lysosome lumen. It is found in the early endosome membrane. It localises to the late endosome membrane. Its subcellular location is the golgi apparatus membrane. The protein localises to the endosome membrane. It carries out the reaction Exonucleolytic cleavage in the 5'- to 3'-direction to yield nucleoside 3'-phosphates.. The catalysed reaction is a 5'-end 5'-dephospho-ribonucleotidyl-ribonucleotide-RNA + H2O = a ribonucleoside 3'-phosphate + a 5'-end dephospho-ribonucleoside-RNA + H(+). It catalyses the reaction a ribonucleoside 3'-phosphate-2'-3'-cyclophospho-GMP + H2O = a ribonucleoside 3'-phosphate + 2',3'-cyclophospho-GMP + H(+). The enzyme catalyses a 5'-end 5'-dephospho-2'-deoxyribonucleotidyl-2'-deoxyribonucleotide in single-stranded DNA + H2O = a 5'-end dephospho-2'-deoxyribonucleoside in single-stranded DNA + a 2'-deoxyribonucleoside 3'-phosphate + H(+). It carries out the reaction a 5'-end 5'-phospho-2'-deoxyribonucleotide in single-stranded DNA + H2O = a 5'-end 5'-dephospho-2'-deoxyribonucleotide in single-stranded DNA + phosphate. The catalysed reaction is a 3-lyso-sn-glycero-1-phospho-(3'-acyl-1'-sn-glycerol) + a 1-acyl-sn-glycerol = a 3-acyl-sn-glycero-1-phospho-(3'-acyl-1'-sn-glycerol) + glycerol. It catalyses the reaction 3-lyso-sn-glycero-1-phospho-(3'-(9Z-octadecenoyl)-1'-sn-glycerol) + 1-(9Z-octadecenoyl)-sn-glycerol = 3-(9Z-octadecenoyl)-sn-glycero-1-phospho-(3'-(9Z-octadecenoyl)-1'-sn-glycerol) + glycerol. Its function is as follows. 5'-&gt;3' exonuclease that hydrolyzes the phosphodiester bond of single-stranded DNA (ssDNA) and RNA molecules to form nucleoside 3'-monophosphates and 5'-end 5'-hydroxy deoxyribonucleotide/ribonucleotide fragments. Partially redundant with PLD4, can cleave all four nucleotides displaying higher efficiency for ssDNA and RNA fragments initiated with uridine and guanosine residues and lower efficiency for cytidine-initiated substrates. As a result, it does not always degrade polynucleotides to the single nucleotide level, it can stall at specific sites sparing certain fragments from exonucleolytic degradation. Processes self and pathogenic ssDNA and RNA molecules that reach the endolysosomal compartment via phagocytosis or autophagy and may serve as 'danger' signals for recognition by innate immune receptors such as toll-like receptors (TLRs). Degrades mitochondrial CpG-rich ssDNA fragments to prevent TLR9 activation and autoinflammatory response, but it can cleave viral RNA to generate ligands for TLR7 activation and initiate antiviral immune responses. In plasmacytoid dendritic cells, it cooperates with endonuclease RNASET2 to release 2',3'-cyclic guanosine monophosphate (2',3'-cGMP), a potent stimulatory ligand for TLR7. Produces 2',3'-cGMPs and cytidine-rich RNA fragments that occupy TLR7 ligand-binding pockets and trigger a signaling-competent state. Can exert polynucleotide phosphatase activity toward 5'-phosphorylated ssDNA substrates although at a slow rate. Transphosphatidylase that catalyzes the exchange with R to S stereo-inversion of the glycerol moiety between (S,R)-lysophosphatidylglycerol (LPG) and monoacylglycerol (MAG) substrates to yield (S,S)-bis(monoacylglycero)phosphate (BMP). Can synthesize a variety of (S,S)-BMPs representing the main phospholipid constituent of lysosomal intralumenal vesicle (ILV) membranes that bind acid hydrolases for lipid degradation. Regulates the homeostasis and interorganellar communication of the endolysosomal system with an overall impact on cellular removal of dysfunctional organelles via autophagy as well as proper protein and lipid turnover. May play a role in myotube formation in response to ER stress. This chain is 5'-3' exonuclease PLD3 (PLD3), found in Macaca fascicularis (Crab-eating macaque).